The sequence spans 232 residues: Large ribosomal subunit protein uL3 (232 aa).

This sequence belongs to the universal ribosomal protein uL3 family. Part of the 50S ribosomal subunit. Forms a cluster with proteins L14 and L19.

One of the primary rRNA binding proteins, it binds directly near the 3'-end of the 23S rRNA, where it nucleates assembly of the 50S subunit. The chain is Large ribosomal subunit protein uL3 from Sorangium cellulosum (strain So ce56) (Polyangium cellulosum (strain So ce56)).